The sequence spans 481 residues: 3-isopropylmalate dehydratase large subunit (481 aa).

The [4Fe-4S] cluster site is built by Cys363, Cys423, and Cys426. The disordered stretch occupies residues 434-465; it reads LRPGQRAASTSNRNFEGRQGRGGRTHLVSPPV.

It belongs to the aconitase/IPM isomerase family. LeuC type 1 subfamily. Heterodimer of LeuC and LeuD. [4Fe-4S] cluster serves as cofactor.

It carries out the reaction (2R,3S)-3-isopropylmalate = (2S)-2-isopropylmalate. The protein operates within amino-acid biosynthesis; L-leucine biosynthesis; L-leucine from 3-methyl-2-oxobutanoate: step 2/4. Its function is as follows. Catalyzes the isomerization between 2-isopropylmalate and 3-isopropylmalate, via the formation of 2-isopropylmaleate. The polypeptide is 3-isopropylmalate dehydratase large subunit (Salinispora tropica (strain ATCC BAA-916 / DSM 44818 / JCM 13857 / NBRC 105044 / CNB-440)).